Here is a 184-residue protein sequence, read N- to C-terminus: Ribosome-recycling factor (184 aa).

It belongs to the RRF family.

Its subcellular location is the cytoplasm. Responsible for the release of ribosomes from messenger RNA at the termination of protein biosynthesis. May increase the efficiency of translation by recycling ribosomes from one round of translation to another. The polypeptide is Ribosome-recycling factor (Hyphomonas neptunium (strain ATCC 15444)).